Consider the following 114-residue polypeptide: Probable 4-amino-4-deoxy-L-arabinose-phosphoundecaprenol flippase subunit ArnE (114 aa).

The next 3 membrane-spanning stretches (helical) occupy residues 38 to 58, 64 to 84, and 94 to 114; these read LTLR…LLWL, LPLS…TLAA, and LRHW…SWHL. One can recognise an EamA domain in the interval 43–112; sequence LAIAVVSLGL…IMFGILLMSW (70 aa).

The protein belongs to the ArnE family. As to quaternary structure, heterodimer of ArnE and ArnF.

It localises to the cell inner membrane. The protein operates within bacterial outer membrane biogenesis; lipopolysaccharide biosynthesis. Its function is as follows. Translocates 4-amino-4-deoxy-L-arabinose-phosphoundecaprenol (alpha-L-Ara4N-phosphoundecaprenol) from the cytoplasmic to the periplasmic side of the inner membrane. This is Probable 4-amino-4-deoxy-L-arabinose-phosphoundecaprenol flippase subunit ArnE from Yersinia pestis bv. Antiqua (strain Antiqua).